A 446-amino-acid polypeptide reads, in one-letter code: Choline monooxygenase, chloroplastic (446 aa).

The transit peptide at 1–65 (MAASATTMLL…NTSTNKIITK (65 aa)) directs the protein to the chloroplast. One can recognise a Rieske domain in the interval 127–234 (WQVAGYSEQV…VAEWGPFILI (108 aa)). [2Fe-2S] cluster contacts are provided by C169, H171, C188, and H191. 2 residues coordinate Fe cation: H294 and H299.

This sequence belongs to the choline monooxygenase family. The cofactor is [2Fe-2S] cluster. Requires Fe cation as cofactor. Mg(2+) is required as a cofactor. Expressed in roots and leaves.

Its subcellular location is the plastid. The protein localises to the chloroplast stroma. It carries out the reaction choline + 2 reduced [2Fe-2S]-[ferredoxin] + O2 + 2 H(+) = betaine aldehyde hydrate + 2 oxidized [2Fe-2S]-[ferredoxin] + H2O. The protein operates within amine and polyamine biosynthesis; betaine biosynthesis via choline pathway; betaine aldehyde from choline (monooxygenase route): step 1/1. In terms of biological role, catalyzes the first step of the osmoprotectant glycine betaine synthesis. The chain is Choline monooxygenase, chloroplastic (CMO) from Beta vulgaris (Sugar beet).